The chain runs to 452 residues: MESPDRKRQKVLKAKKTMPTSYQKQLEILNKSTNVEAPKTTVGTNIPNGHNQKMFSKNKENVKVMKVSEQINENACGALERHTALLEQVKHWIRQEICMINCNLFDKKLNELNERIGKTQCKSRHEAIAGELFVKIRRLQKRIKTVLSSQRNCLEPNTLPSNTVCKVTDSEAMNLNVTQKSVKSRSKRISSVNHTPLNSSEKAGRKTNLPSTCVEFASESNTDDVMLISVKNSNLTTSITSEQTEIRKNTSRNLSNSPNSMIKVGPVEKKFDFVIDLTREGPSNYSIESPSFTLKSTSKAVLRSKEIIPVAENGNEGFGSFEHLPPLPEPPAPLPEMADKIKDTLPPQKPELKVKWVLRPTSIALTWNIPKVNPNCAPVESYHLFLYYENSDHLTWKKIAEIKALPLPMACTLSQNLASTKYYFAVQSKDIFGRYGPFCNIKSIPRFSENLT.

Serine 184 is modified (phosphoserine). The interval 185 to 206 is disordered; sequence RSKRISSVNHTPLNSSEKAGRK. Serine 257 is modified (phosphoserine). Positions 346–450 constitute a Fibronectin type-III domain; it reads PPQKPELKVK…IKSIPRFSEN (105 aa).

It belongs to the MCAF family. In terms of assembly, interacts with MBD1, SETDB1 and SP1. Probably forms a complex with SETDB1 and MBD1. As to expression, expressed in testis.

The protein resides in the nucleus. In terms of biological role, recruiter that couples transcriptional factors to general transcription apparatus and thereby modulates transcription regulation and chromatin formation. Can both act as an activator or a repressor depending on the context. Mediates MBD1-dependent transcriptional repression, probably by recruiting complexes containing SETDB1. The complex formed with MBD1 and SETDB1 represses transcription and probably couples DNA methylation and histone H3 'Lys-9' trimethylation (H3K9me3) activity. The chain is Activating transcription factor 7-interacting protein 2 (Atf7ip2) from Mus musculus (Mouse).